Consider the following 226-residue polypeptide: Ribonuclease 3 (226 aa).

The region spanning 7–134 (KQNLKKKYGI…FNGALFLDQG (128 aa)) is the RNase III domain. Residue glutamate 47 participates in Mg(2+) binding. The active site involves aspartate 51. Mg(2+) contacts are provided by aspartate 120 and glutamate 123. Glutamate 123 is a catalytic residue. Positions 160–226 (DYKTELQERL…AAQAALDKNK (67 aa)) constitute a DRBM domain. The disordered stretch occupies residues 201-226 (KVSEGQGRNKKAAEQQAAQAALDKNK). Over residues 214–226 (EQQAAQAALDKNK) the composition is skewed to low complexity.

The protein belongs to the ribonuclease III family. Homodimer. It depends on Mg(2+) as a cofactor.

Its subcellular location is the cytoplasm. It catalyses the reaction Endonucleolytic cleavage to 5'-phosphomonoester.. Its function is as follows. Digests double-stranded RNA. Involved in the processing of primary rRNA transcript to yield the immediate precursors to the large and small rRNAs (23S and 16S). Processes some mRNAs, and tRNAs when they are encoded in the rRNA operon. Processes pre-crRNA and tracrRNA of type II CRISPR loci if present in the organism. This chain is Ribonuclease 3, found in Lactobacillus johnsonii (strain CNCM I-12250 / La1 / NCC 533).